Here is a 91-residue protein sequence, read N- to C-terminus: YcgL domain-containing protein Sde_1339 (91 aa).

One can recognise a YcgL domain in the interval 1-85 (MIVDIYRSAK…PPESYMNEIP (85 aa)). The segment at 72–91 (QMPPPPESYMNEIPNDKMPR) is disordered.

The protein is YcgL domain-containing protein Sde_1339 of Saccharophagus degradans (strain 2-40 / ATCC 43961 / DSM 17024).